The primary structure comprises 312 residues: Light-independent protochlorophyllide reductase iron-sulfur ATP-binding protein (312 aa).

ATP is bound by residues 55–60 and K84; that span reads GIGKST. Residue S59 participates in Mg(2+) binding. Residues C140 and C174 each contribute to the [4Fe-4S] cluster site. Residues 225–226 and 249–251 contribute to the ATP site; these read NR and PDL.

This sequence belongs to the NifH/BchL/ChlL family. Homodimer. Protochlorophyllide reductase is composed of three subunits; BchL, BchN and BchB. [4Fe-4S] cluster is required as a cofactor.

The enzyme catalyses chlorophyllide a + oxidized 2[4Fe-4S]-[ferredoxin] + 2 ADP + 2 phosphate = protochlorophyllide a + reduced 2[4Fe-4S]-[ferredoxin] + 2 ATP + 2 H2O. The protein operates within porphyrin-containing compound metabolism; bacteriochlorophyll biosynthesis (light-independent). In terms of biological role, component of the dark-operative protochlorophyllide reductase (DPOR) that uses Mg-ATP and reduced ferredoxin to reduce ring D of protochlorophyllide (Pchlide) to form chlorophyllide a (Chlide). This reaction is light-independent. The L component serves as a unique electron donor to the NB-component of the complex, and binds Mg-ATP. The chain is Light-independent protochlorophyllide reductase iron-sulfur ATP-binding protein from Rhodopseudomonas palustris (strain HaA2).